The primary structure comprises 882 residues: Translation initiation factor IF-2 (882 aa).

Positions 50-299 are disordered; sequence SFKSANTTKP…KERPLPETLV (250 aa). Basic and acidic residues-rich tracts occupy residues 60-71 and 84-96; these read STEKDSKNSSRK and RRRD…DNRH. Residues 97–108 show a composition bias toward basic residues; the sequence is GNNKRRNNKFKK. Basic and acidic residues-rich tracts occupy residues 109-133, 169-183, 232-242, and 250-263; these read QQND…DLLN, KKVE…EKLE, QKEETKPTRKK, and EVPD…EHSD. Positions 264-277 are enriched in basic residues; the sequence is KARRRRNKKNKRIN. Over residues 278-294 the composition is skewed to basic and acidic residues; that stretch reads QSKEIKKQPTQRKERPL. The tr-type G domain maps to 383–552; the sequence is KRPPVVTIMG…LLQADVMELK (170 aa). A G1 region spans residues 392 to 399; it reads GHVDHGKT. GTP is bound at residue 392-399; that stretch reads GHVDHGKT. The tract at residues 417–421 is G2; the sequence is GITQK. Residues 438-441 form a G3 region; sequence DTPG. GTP is bound by residues 438 to 442 and 492 to 495; these read DTPGH and NKID. Positions 492 to 495 are G4; it reads NKID. The interval 528–530 is G5; that stretch reads SAK.

This sequence belongs to the TRAFAC class translation factor GTPase superfamily. Classic translation factor GTPase family. IF-2 subfamily.

Its subcellular location is the cytoplasm. Its function is as follows. One of the essential components for the initiation of protein synthesis. Protects formylmethionyl-tRNA from spontaneous hydrolysis and promotes its binding to the 30S ribosomal subunits. Also involved in the hydrolysis of GTP during the formation of the 70S ribosomal complex. This is Translation initiation factor IF-2 from Lactobacillus gasseri (strain ATCC 33323 / DSM 20243 / BCRC 14619 / CIP 102991 / JCM 1131 / KCTC 3163 / NCIMB 11718 / NCTC 13722 / AM63).